The following is a 343-amino-acid chain: Heat-inducible transcription repressor HrcA (343 aa).

This sequence belongs to the HrcA family.

Its function is as follows. Negative regulator of class I heat shock genes (grpE-dnaK-dnaJ and groELS operons). Prevents heat-shock induction of these operons. The polypeptide is Heat-inducible transcription repressor HrcA (Mycolicibacterium paratuberculosis (strain ATCC BAA-968 / K-10) (Mycobacterium paratuberculosis)).